We begin with the raw amino-acid sequence, 469 residues long: 3-isopropylmalate dehydratase large subunit (469 aa).

[4Fe-4S] cluster is bound by residues C350, C410, and C413.

Belongs to the aconitase/IPM isomerase family. LeuC type 1 subfamily. In terms of assembly, heterodimer of LeuC and LeuD. [4Fe-4S] cluster is required as a cofactor.

The enzyme catalyses (2R,3S)-3-isopropylmalate = (2S)-2-isopropylmalate. It functions in the pathway amino-acid biosynthesis; L-leucine biosynthesis; L-leucine from 3-methyl-2-oxobutanoate: step 2/4. Catalyzes the isomerization between 2-isopropylmalate and 3-isopropylmalate, via the formation of 2-isopropylmaleate. This is 3-isopropylmalate dehydratase large subunit from Sinorhizobium medicae (strain WSM419) (Ensifer medicae).